The primary structure comprises 99 residues: Large ribosomal subunit protein bL28 (99 aa).

This sequence belongs to the bacterial ribosomal protein bL28 family.

The chain is Large ribosomal subunit protein bL28 from Rhizobium etli (strain CIAT 652).